We begin with the raw amino-acid sequence, 156 residues long: Transcriptional repressor NrdR (156 aa).

Residues 3-34 (CPFCQHGHSRVIDSRVIEAGSAIRRRRECSQC) fold into a zinc finger. The 91-residue stretch at 46 to 136 (LLVLKRNGVT…VYKSFESADD (91 aa)) folds into the ATP-cone domain.

The protein belongs to the NrdR family. Requires Zn(2+) as cofactor.

In terms of biological role, negatively regulates transcription of bacterial ribonucleotide reductase nrd genes and operons by binding to NrdR-boxes. The chain is Transcriptional repressor NrdR from Corynebacterium efficiens (strain DSM 44549 / YS-314 / AJ 12310 / JCM 11189 / NBRC 100395).